A 909-amino-acid chain; its full sequence is Epithelial discoidin domain-containing receptor 1 (909 aa).

The N-terminal stretch at 1 to 18 (MGPEALSSLLLLLLVASG) is a signal peptide. Over 21 to 413 (DMKGHFDPAK…VAKAEGSPTA (393 aa)) the chain is Extracellular. One can recognise an F5/8 type C domain in the interval 31-181 (CRYALGMQDR…VCLRVELYGC (151 aa)). Disulfide bonds link Cys31–Cys181 and Cys70–Cys173. Over residues 45–60 (SDISASSSWSDSTAAR) the composition is skewed to low complexity. The segment at 45 to 65 (SDISASSSWSDSTAARHSSDG) is disordered. The interval 188-363 (LSYTAPVGQT…LFSEISFISD (176 aa)) is DS-like domain. Asn207, Gln226, Asp229, Val231, Tyr249, and Tyr251 together coordinate Ca(2+). N-linked (GlcNAc...) asparagine glycosylation occurs at Asn207. Asn256 carries an N-linked (GlcNAc...) asparagine glycan. A disulfide bridge connects residues Cys299 and Cys344. Ca(2+) contacts are provided by Ser356 and Glu357. Asn366 and Asn390 each carry an N-linked (GlcNAc...) asparagine glycan. A helical transmembrane segment spans residues 414 to 434 (ILIGCLVAIILLLLLIIALML). Residues 435-909 (WRLHWRRLLS…FLAEDALNTV (475 aa)) lie on the Cytoplasmic side of the membrane. A disordered region spans residues 466–495 (ILINNRPGPREPPPYQEPRPRGNPPHSAPC). The segment covering 475–492 (REPPPYQEPRPRGNPPHS) has biased composition (pro residues). Positions 477–480 (PPPY) match the PPxY motif motif. 3 positions are modified to phosphotyrosine; by autocatalysis: Tyr480, Tyr509, and Tyr516. In terms of domain architecture, Protein kinase spans 606–901 (LRFKEKLGEG…PPFSQLHRFL (296 aa)). 612–620 (LGEGQFGEV) contributes to the ATP binding site. Ser627 carries the post-translational modification Phosphoserine. Lys651 lines the ATP pocket. The residue at position 736 (Tyr736) is a Phosphotyrosine; by autocatalysis. The active-site Proton acceptor is the Asp762. 3 positions are modified to phosphotyrosine; by autocatalysis: Tyr788, Tyr792, and Tyr793.

This sequence belongs to the protein kinase superfamily. Tyr protein kinase family. Insulin receptor subfamily. In terms of assembly, homodimer. Interacts (via PPxY motif) with WWC1 (via WW domains) in a collagen-regulated manner. Forms a tripartite complex with WWC1 and PRKCZ, but predominantly in the absence of collagen. Interacts (tyrosine phosphorylated) with SHC1. Interacts with SRC. Interacts with MYH9. Interacts with CDH1. Interacts with PTPN11. Interacts with NCK2. Post-translationally, autophosphorylated in response to fibrillar collagen binding.

It localises to the cell membrane. The catalysed reaction is L-tyrosyl-[protein] + ATP = O-phospho-L-tyrosyl-[protein] + ADP + H(+). Its function is as follows. Tyrosine kinase that functions as a cell surface receptor for fibrillar collagen and regulates cell attachment to the extracellular matrix, remodeling of the extracellular matrix, cell migration, differentiation, survival and cell proliferation. Collagen binding triggers a signaling pathway that involves SRC and leads to the activation of MAP kinases. Regulates remodeling of the extracellular matrix by up-regulation of the matrix metalloproteinases MMP2, MMP7 and MMP9, and thereby facilitates cell migration and wound healing. Promotes smooth muscle cell migration, and thereby contributes to arterial wound healing. Also plays a role in tumor cell invasion. Phosphorylates PTPN11. Required for normal blastocyst implantation during pregnancy, for normal mammary gland differentiation and normal lactation. Required for normal ear morphology and normal hearing. The polypeptide is Epithelial discoidin domain-containing receptor 1 (DDR1) (Pan troglodytes (Chimpanzee)).